We begin with the raw amino-acid sequence, 41 residues long: Photosystem I reaction center subunit IX (41 aa).

Residues 7-27 (YLSTAPVLLTLWMTFTAGFII) form a helical membrane-spanning segment.

The protein belongs to the PsaJ family.

The protein resides in the plastid. Its subcellular location is the chloroplast thylakoid membrane. Its function is as follows. May help in the organization of the PsaE and PsaF subunits. This chain is Photosystem I reaction center subunit IX, found in Thalassiosira pseudonana (Marine diatom).